Here is a 414-residue protein sequence, read N- to C-terminus: Serine hydroxymethyltransferase (414 aa).

(6S)-5,6,7,8-tetrahydrofolate-binding positions include Leu-116 and 120 to 122 (GHL). The residue at position 224 (Lys-224) is an N6-(pyridoxal phosphate)lysine. Residues Glu-240 and 348–350 (SPF) each bind (6S)-5,6,7,8-tetrahydrofolate.

Belongs to the SHMT family. Homodimer. It depends on pyridoxal 5'-phosphate as a cofactor.

It localises to the cytoplasm. It carries out the reaction (6R)-5,10-methylene-5,6,7,8-tetrahydrofolate + glycine + H2O = (6S)-5,6,7,8-tetrahydrofolate + L-serine. It participates in one-carbon metabolism; tetrahydrofolate interconversion. Its pathway is amino-acid biosynthesis; glycine biosynthesis; glycine from L-serine: step 1/1. Catalyzes the reversible interconversion of serine and glycine with tetrahydrofolate (THF) serving as the one-carbon carrier. This reaction serves as the major source of one-carbon groups required for the biosynthesis of purines, thymidylate, methionine, and other important biomolecules. Also exhibits THF-independent aldolase activity toward beta-hydroxyamino acids, producing glycine and aldehydes, via a retro-aldol mechanism. This Campylobacter jejuni (strain RM1221) protein is Serine hydroxymethyltransferase.